Reading from the N-terminus, the 233-residue chain is 5-demethoxyubiquinone hydroxylase, mitochondrial (233 aa).

Residues M1–F15 constitute a mitochondrion transit peptide. Residues S20 and S28 each carry the phosphoserine modification. T32 carries the post-translational modification Phosphothreonine. The Fe cation site is built by E63, E95, H98, E147, E194, and H197.

Belongs to the COQ7 family. In terms of assembly, component of a multi-subunit COQ enzyme complex, composed of at least COQ3, COQ4, COQ5, COQ6, COQ7 and COQ9. The cofactor is Fe cation. Phosphorylated. Dephosphorylated by PTC7; dephosphorylation is essential for enzyme activation.

The protein localises to the mitochondrion inner membrane. The enzyme catalyses a 5-methoxy-2-methyl-3-(all-trans-polyprenyl)benzene-1,4-diol + AH2 + O2 = a 3-demethylubiquinol + A + H2O. It catalyses the reaction a 5-methoxy-2-methyl-3-(all-trans-polyprenyl)benzoquinone + NADH + O2 = a 3-demethylubiquinone + NAD(+) + H2O. It functions in the pathway cofactor biosynthesis; ubiquinone biosynthesis. Dephosphorylation by PTC7 leads to activation. Its function is as follows. Catalyzes the hydroxylation of 2-hexaprenyl-3-methyl-6-methoxy-1,4-benzoquinol (DMQH2) during ubiquinone biosynthesis. Also catalyzes the hydroxylation of the 5-methoxy-2-methyl-3-(all-trans-polyprenyl)benzoquinone at the C6 position and participates in the biosynthesis of ubiquinone. Also has a structural role in the COQ enzyme complex, stabilizing COQ3 and COQ4 polypeptides. This chain is 5-demethoxyubiquinone hydroxylase, mitochondrial, found in Saccharomyces cerevisiae (strain ATCC 204508 / S288c) (Baker's yeast).